The sequence spans 396 residues: MAKAKFERNKPHCNIGTIGHVDHGKTSLTAAITKVLAETGGATFTAYDQIDKAPEEKARGITISTAHVEYETSNRHYAHVDCPGHADYVKNMITGAAQMDGAILVVSAADGPMPQTREHILLARQVGVPALVVFLNKCDMVDDPELLELVEMEVRELLSKYDFPGDDIPIVKGSALAALENSDAKLGHDAILELMKAVDAYIPQPERPIDQPFLMPVEDVFSISGRGTVVTGRVERGIVKVGEEIEIVGIRDTQKTTCTGVEMFRKLLDQGQAGDNIGCLLRGTKREDVERGQVLCKPGSVKPHTKFKAEAYILTKEEGGRHTPFFTNYRPQFYFRTTDVTGVVHLPEGTEMVMPGDNIAMEVHLIVPIAMEEKLRFAIREGGRTVGAGVVASIIE.

The 197-residue stretch at 10 to 206 folds into the tr-type G domain; that stretch reads KPHCNIGTIG…AVDAYIPQPE (197 aa). Positions 19–26 are G1; that stretch reads GHVDHGKT. 19-26 is a GTP binding site; sequence GHVDHGKT. Threonine 26 is a binding site for Mg(2+). Residues 60–64 are G2; the sequence is GITIS. A G3 region spans residues 81–84; it reads DCPG. Residues 81 to 85 and 136 to 139 each bind GTP; these read DCPGH and NKCD. A G4 region spans residues 136–139; sequence NKCD. A G5 region spans residues 174 to 176; the sequence is SAL.

Belongs to the TRAFAC class translation factor GTPase superfamily. Classic translation factor GTPase family. EF-Tu/EF-1A subfamily. In terms of assembly, monomer.

Its subcellular location is the cytoplasm. It catalyses the reaction GTP + H2O = GDP + phosphate + H(+). Its function is as follows. GTP hydrolase that promotes the GTP-dependent binding of aminoacyl-tRNA to the A-site of ribosomes during protein biosynthesis. The sequence is that of Elongation factor Tu 2 from Rhodopseudomonas palustris (strain BisB5).